The sequence spans 338 residues: Serpentine receptor class alpha-32 (338 aa).

The next 7 membrane-spanning stretches (helical) occupy residues 30-50 (VYVI…IHAI), 63-83 (ITHL…SYTI), 120-140 (RFLF…VILF), 152-172 (GEIL…LLHL), 199-219 (LTSY…MMWY), 249-269 (LNSL…FVLA), and 289-309 (TTPY…QWIG).

This sequence belongs to the nematode receptor-like protein sra family.

It localises to the membrane. The chain is Serpentine receptor class alpha-32 (sra-32) from Caenorhabditis elegans.